The following is a 112-amino-acid chain: Larval cuticle protein 4 (112 aa).

Positions 1–16 (MFKILLVCALVALVAA) are cleaved as a signal peptide. The region spanning 31 to 92 (ADGFVSKLVL…PQSDLLPTPP (62 aa)) is the Chitin-binding type R&amp;R domain.

Functionally, component of the larval cuticle. The protein is Larval cuticle protein 4 (Lcp4) of Drosophila melanogaster (Fruit fly).